We begin with the raw amino-acid sequence, 393 residues long: uncharacterized protein (393 aa).

Positions Ala-164 to Glu-183 are disordered. Residues Ser-173–Glu-183 are compositionally biased toward polar residues.

This is an uncharacterized protein from Treponema pallidum (strain Nichols).